The chain runs to 478 residues: Serine hydroxymethyltransferase (478 aa).

(6S)-5,6,7,8-tetrahydrofolate is bound by residues Leu-161 and 165-167; that span reads GHL. Lys-273 is modified (N6-(pyridoxal phosphate)lysine). Glu-291 provides a ligand contact to (6S)-5,6,7,8-tetrahydrofolate.

This sequence belongs to the SHMT family. In terms of assembly, homodimer. The cofactor is pyridoxal 5'-phosphate.

Its subcellular location is the cytoplasm. It catalyses the reaction (6R)-5,10-methylene-5,6,7,8-tetrahydrofolate + glycine + H2O = (6S)-5,6,7,8-tetrahydrofolate + L-serine. The protein operates within one-carbon metabolism; tetrahydrofolate interconversion. It functions in the pathway amino-acid biosynthesis; glycine biosynthesis; glycine from L-serine: step 1/1. Its function is as follows. Catalyzes the reversible interconversion of serine and glycine with tetrahydrofolate (THF) serving as the one-carbon carrier. This reaction serves as the major source of one-carbon groups required for the biosynthesis of purines, thymidylate, methionine, and other important biomolecules. Also exhibits THF-independent aldolase activity toward beta-hydroxyamino acids, producing glycine and aldehydes, via a retro-aldol mechanism. This is Serine hydroxymethyltransferase from Salinispora tropica (strain ATCC BAA-916 / DSM 44818 / JCM 13857 / NBRC 105044 / CNB-440).